Reading from the N-terminus, the 1562-residue chain is Cell wall protein RBR3 (1562 aa).

Residues 1–20 (MIIFRKSFFTFWLLLNSVLA) form the signal peptide. An N-linked (GlcNAc...) asparagine glycan is attached at asparagine 190. Residues 338-353 (APGTNPTEYTTTITTT) show a composition bias toward low complexity. Residues 338–366 (APGTNPTEYTTTITTTNSAGKPLTETGVV) are disordered. Residue asparagine 373 is glycosylated (N-linked (GlcNAc...) asparagine). 2 stretches are compositionally biased toward low complexity: residues 383 to 415 (FPTS…SQPS) and 422 to 729 (SSSK…ISAT). Disordered regions lie at residues 383–729 (FPTS…ISAT), 1404–1424 (GSGS…SSSN), and 1455–1486 (YSSG…GNSN). Asparagine 602, asparagine 679, and asparagine 705 each carry an N-linked (GlcNAc...) asparagine glycan. The span at 1407–1419 (SDSGSGSGSGSGS) shows a compositional bias: gly residues. Polar residues predominate over residues 1468–1486 (GANNVGSNQTPTVSGGNSN). Asparagine 1538 carries GPI-anchor amidated asparagine lipidation. The propeptide at 1539 to 1562 (SGSKFSVGKSAFIAIILTTFIGFI) is removed in mature form.

Belongs to the HYR1/IFF family. Post-translationally, the GPI-anchor is attached to the protein in the endoplasmic reticulum and serves to target the protein to the cell surface. There, the glucosamine-inositol phospholipid moiety is cleaved off and the GPI-modified mannoprotein is covalently attached via its lipidless GPI glycan remnant to the 1,6-beta-glucan of the outer cell wall layer.

The protein resides in the secreted. The protein localises to the cell wall. Its subcellular location is the membrane. Its function is as follows. GPI-anchored cell wall protein involved in cell wall organization, hyphal growth, as well as in host-fungal interaction and virulence. The protein is Cell wall protein RBR3 (RBR3) of Candida albicans (strain SC5314 / ATCC MYA-2876) (Yeast).